Reading from the N-terminus, the 1165-residue chain is DNA-directed RNA polymerase subunit beta' (1165 aa).

Zn(2+)-binding residues include Cys60, Cys62, Cys75, and Cys78. Mg(2+) contacts are provided by Asp449, Asp451, and Asp453. Residues Cys794, Cys868, Cys875, and Cys878 each coordinate Zn(2+).

Belongs to the RNA polymerase beta' chain family. In terms of assembly, the RNAP catalytic core consists of 2 alpha, 1 beta, 1 beta' and 1 omega subunit. When a sigma factor is associated with the core the holoenzyme is formed, which can initiate transcription. Requires Mg(2+) as cofactor. It depends on Zn(2+) as a cofactor.

The enzyme catalyses RNA(n) + a ribonucleoside 5'-triphosphate = RNA(n+1) + diphosphate. DNA-dependent RNA polymerase catalyzes the transcription of DNA into RNA using the four ribonucleoside triphosphates as substrates. This chain is DNA-directed RNA polymerase subunit beta', found in Acetivibrio thermocellus (strain ATCC 27405 / DSM 1237 / JCM 9322 / NBRC 103400 / NCIMB 10682 / NRRL B-4536 / VPI 7372) (Clostridium thermocellum).